Consider the following 141-residue polypeptide: ATP synthase epsilon chain (141 aa).

It belongs to the ATPase epsilon chain family. F-type ATPases have 2 components, CF(1) - the catalytic core - and CF(0) - the membrane proton channel. CF(1) has five subunits: alpha(3), beta(3), gamma(1), delta(1), epsilon(1). CF(0) has three main subunits: a, b and c.

Its subcellular location is the cell inner membrane. Functionally, produces ATP from ADP in the presence of a proton gradient across the membrane. The polypeptide is ATP synthase epsilon chain (Hahella chejuensis (strain KCTC 2396)).